The primary structure comprises 55 residues: Large ribosomal subunit protein bL33 (55 aa).

The span at methionine 1–leucine 11 shows a compositional bias: basic and acidic residues. A disordered region spans residues methionine 1 to threonine 29. The span at threonine 14–threonine 24 shows a compositional bias: polar residues.

It belongs to the bacterial ribosomal protein bL33 family.

The protein is Large ribosomal subunit protein bL33 of Thiobacillus denitrificans (strain ATCC 25259 / T1).